The sequence spans 204 residues: Large ribosomal subunit protein bL25 (204 aa).

It belongs to the bacterial ribosomal protein bL25 family. CTC subfamily. In terms of assembly, part of the 50S ribosomal subunit; part of the 5S rRNA/L5/L18/L25 subcomplex. Contacts the 5S rRNA. Binds to the 5S rRNA independently of L5 and L18.

Its function is as follows. This is one of the proteins that binds to the 5S RNA in the ribosome where it forms part of the central protuberance. This is Large ribosomal subunit protein bL25 from Rhizobium etli (strain ATCC 51251 / DSM 11541 / JCM 21823 / NBRC 15573 / CFN 42).